The primary structure comprises 252 residues: Thiamine thiazole synthase (252 aa).

Residues Ser35, 54 to 55 (EK), Gly62, Val126, and 152 to 154 (HVD) each bind NAD(+). Positions 154 and 169 each coordinate Fe cation. Met217 provides a ligand contact to NAD(+). Position 227 (Arg227) interacts with glycine.

Belongs to the THI4 family. In terms of assembly, homooctamer; tetramer of dimers. Requires Fe(2+) as cofactor.

It carries out the reaction hydrogen sulfide + glycine + NAD(+) = ADP-5-ethyl-4-methylthiazole-2-carboxylate + nicotinamide + 3 H2O + H(+). The protein operates within cofactor biosynthesis; thiamine diphosphate biosynthesis. Functionally, involved in the biosynthesis of the thiazole moiety of thiamine. Catalyzes the conversion of NAD and glycine to adenosine diphosphate 5-(2-hydroxyethyl)-4-methylthiazole-2-carboxylate (ADT), an adenylated thiazole intermediate, using free sulfide as a source of sulfur. The chain is Thiamine thiazole synthase from Pyrococcus horikoshii (strain ATCC 700860 / DSM 12428 / JCM 9974 / NBRC 100139 / OT-3).